Reading from the N-terminus, the 622-residue chain is Interleukin-1 receptor-associated kinase-like 2 (622 aa).

One can recognise a Death domain in the interval 13-94 (LDDLCRNIDT…RAAQIVLSWK (82 aa)). Residues 208-473 (FDQSHRISEG…LPEACEEAWA (266 aa)) form the Protein kinase domain. Residues 214–222 (ISEGTFADI), Lys-235, and 335–338 (KSAN) contribute to the ATP site. Disordered stretches follow at residues 511 to 532 (RVSE…VDNS) and 553 to 591 (LFTG…ETSW). 2 stretches are compositionally biased toward polar residues: residues 513–523 (SEATGSSSNTP) and 561–590 (QPST…TETS).

It belongs to the protein kinase superfamily. TKL Ser/Thr protein kinase family. Pelle subfamily. Interacts with MYD88. IL-1 stimulation leads to the formation of a signaling complex which dissociates from the IL-1 receptor following the binding of PELI1. In terms of tissue distribution, ubiquitously expressed, with a higher expression observed in brain, spleen and liver. Isoform 1 and isoform 2 are considered agonist and isoform 3 and isoform 4 are considered antagonist.

Binds to the IL-1 type I receptor following IL-1 engagement, triggering intracellular signaling cascades leading to transcriptional up-regulation and mRNA stabilization. In Mus musculus (Mouse), this protein is Interleukin-1 receptor-associated kinase-like 2 (Irak2).